Here is a 1024-residue protein sequence, read N- to C-terminus: Beta-galactosidase (1024 aa).

Residues Asn103 and Asp202 each coordinate substrate. Na(+) is bound at residue Asp202. The Mg(2+) site is built by Glu417, His419, and Glu462. Substrate contacts are provided by residues Glu462 and 538–541 (EYAH). Glu462 functions as the Proton donor in the catalytic mechanism. Glu538 functions as the Nucleophile in the catalytic mechanism. Asn598 lines the Mg(2+) pocket. Na(+)-binding residues include Phe602 and Asn605. Substrate is bound by residues Asn605 and Trp1000.

The protein belongs to the glycosyl hydrolase 2 family. Homotetramer. The cofactor is Mg(2+). It depends on Mn(2+) as a cofactor. Na(+) serves as cofactor.

It catalyses the reaction Hydrolysis of terminal non-reducing beta-D-galactose residues in beta-D-galactosides.. With respect to regulation, inhibited by phenylethyl thio-beta-D-galactoside (PETG), isopropyl thio-beta-D-galactoside (IPTG), L-ribose, D-galactonolactone, lactose and 2-amino-D-galactose. The polypeptide is Beta-galactosidase (lacZ) (Escherichia coli (strain K12)).